Here is a 96-residue protein sequence, read N- to C-terminus: Small ribosomal subunit protein bS18 (96 aa).

The protein belongs to the bacterial ribosomal protein bS18 family. As to quaternary structure, part of the 30S ribosomal subunit. Forms a tight heterodimer with protein bS6.

Its function is as follows. Binds as a heterodimer with protein bS6 to the central domain of the 16S rRNA, where it helps stabilize the platform of the 30S subunit. This is Small ribosomal subunit protein bS18 from Gluconobacter oxydans (strain 621H) (Gluconobacter suboxydans).